The chain runs to 849 residues: G-type lectin S-receptor-like serine/threonine-protein kinase B120 (849 aa).

An N-terminal signal peptide occupies residues 1 to 25 (MRFFRKTSLYLSLFLYFFLYESSMA). The 128-residue stretch at 26-153 (ANTIRRGESL…DTDRPIWESF (128 aa)) folds into the Bulb-type lectin domain. The Extracellular segment spans residues 26-438 (ANTIRRGESL…SEVGENRKTK (413 aa)). Asparagine 110, asparagine 191, asparagine 210, asparagine 230, asparagine 273, and asparagine 282 each carry an N-linked (GlcNAc...) asparagine glycan. The 38-residue stretch at 295–332 (PDSECDQYNRCGKFGICDMKGSNGICSCIHGYEQVSVG) folds into the EGF-like; atypical domain. Cystine bridges form between cysteine 299-cysteine 311 and cysteine 305-cysteine 320. N-linked (GlcNAc...) asparagine glycans are attached at residues asparagine 333, asparagine 349, and asparagine 388. The region spanning 346–427 (CERNISVGED…GGSSLHIRLA (82 aa)) is the PAN domain. Cystine bridges form between cysteine 381/cysteine 402 and cysteine 385/cysteine 391. The helical transmembrane segment at 439-459 (IAVIVAVLVGVILIGIFALLL) threads the bilayer. Residues 460-849 (WRFKRKKDVS…EITSTVVLGR (390 aa)) lie on the Cytoplasmic side of the membrane. In terms of domain architecture, Protein kinase spans 529-814 (FCKENELGRG…TLAAPRQPTF (286 aa)). Residues 535 to 543 (LGRGGFGPV) and lysine 557 each bind ATP. Serine 563 is modified (phosphoserine). The segment at 618–635 (TKQALIDWKLRFSIIEGI) is caM-binding. Aspartate 654 acts as the Proton acceptor in catalysis. A phosphoserine mark is found at serine 658 and serine 671. Threonine 688 bears the Phosphothreonine mark. A phosphoserine mark is found at serine 732 and serine 837. Threonine 844 carries the phosphothreonine modification.

Belongs to the protein kinase superfamily. Ser/Thr protein kinase family.

Its subcellular location is the cell membrane. It catalyses the reaction L-seryl-[protein] + ATP = O-phospho-L-seryl-[protein] + ADP + H(+). It carries out the reaction L-threonyl-[protein] + ATP = O-phospho-L-threonyl-[protein] + ADP + H(+). This is G-type lectin S-receptor-like serine/threonine-protein kinase B120 (B120) from Arabidopsis thaliana (Mouse-ear cress).